Here is a 354-residue protein sequence, read N- to C-terminus: Holliday junction branch migration complex subunit RuvB (354 aa).

The interval 4 to 190 (TDKLAAERII…FGIVARLEFY (187 aa)) is large ATPase domain (RuvB-L). ATP-binding positions include leucine 29, arginine 30, glycine 71, lysine 74, threonine 75, threonine 76, 137–139 (EDY), arginine 180, tyrosine 190, and arginine 227. Threonine 75 contributes to the Mg(2+) binding site. Residues 191–261 (DADQLARIVR…VADAALAMLD (71 aa)) are small ATPAse domain (RuvB-S). The segment at 264–354 (PVGFDLMDRK…RGMWDTPAGK (91 aa)) is head domain (RuvB-H). DNA is bound by residues arginine 300, arginine 319, and arginine 324.

It belongs to the RuvB family. Homohexamer. Forms an RuvA(8)-RuvB(12)-Holliday junction (HJ) complex. HJ DNA is sandwiched between 2 RuvA tetramers; dsDNA enters through RuvA and exits via RuvB. An RuvB hexamer assembles on each DNA strand where it exits the tetramer. Each RuvB hexamer is contacted by two RuvA subunits (via domain III) on 2 adjacent RuvB subunits; this complex drives branch migration. In the full resolvosome a probable DNA-RuvA(4)-RuvB(12)-RuvC(2) complex forms which resolves the HJ.

Its subcellular location is the cytoplasm. The enzyme catalyses ATP + H2O = ADP + phosphate + H(+). The RuvA-RuvB-RuvC complex processes Holliday junction (HJ) DNA during genetic recombination and DNA repair, while the RuvA-RuvB complex plays an important role in the rescue of blocked DNA replication forks via replication fork reversal (RFR). RuvA specifically binds to HJ cruciform DNA, conferring on it an open structure. The RuvB hexamer acts as an ATP-dependent pump, pulling dsDNA into and through the RuvAB complex. RuvB forms 2 homohexamers on either side of HJ DNA bound by 1 or 2 RuvA tetramers; 4 subunits per hexamer contact DNA at a time. Coordinated motions by a converter formed by DNA-disengaged RuvB subunits stimulates ATP hydrolysis and nucleotide exchange. Immobilization of the converter enables RuvB to convert the ATP-contained energy into a lever motion, pulling 2 nucleotides of DNA out of the RuvA tetramer per ATP hydrolyzed, thus driving DNA branch migration. The RuvB motors rotate together with the DNA substrate, which together with the progressing nucleotide cycle form the mechanistic basis for DNA recombination by continuous HJ branch migration. Branch migration allows RuvC to scan DNA until it finds its consensus sequence, where it cleaves and resolves cruciform DNA. The sequence is that of Holliday junction branch migration complex subunit RuvB from Burkholderia ambifaria (strain MC40-6).